The following is a 258-amino-acid chain: Imidazole glycerol phosphate synthase subunit HisF (258 aa).

Residues D11 and D130 contribute to the active site.

The protein belongs to the HisA/HisF family. In terms of assembly, heterodimer of HisH and HisF.

The protein localises to the cytoplasm. It carries out the reaction 5-[(5-phospho-1-deoxy-D-ribulos-1-ylimino)methylamino]-1-(5-phospho-beta-D-ribosyl)imidazole-4-carboxamide + L-glutamine = D-erythro-1-(imidazol-4-yl)glycerol 3-phosphate + 5-amino-1-(5-phospho-beta-D-ribosyl)imidazole-4-carboxamide + L-glutamate + H(+). The protein operates within amino-acid biosynthesis; L-histidine biosynthesis; L-histidine from 5-phospho-alpha-D-ribose 1-diphosphate: step 5/9. Functionally, IGPS catalyzes the conversion of PRFAR and glutamine to IGP, AICAR and glutamate. The HisF subunit catalyzes the cyclization activity that produces IGP and AICAR from PRFAR using the ammonia provided by the HisH subunit. This Photorhabdus laumondii subsp. laumondii (strain DSM 15139 / CIP 105565 / TT01) (Photorhabdus luminescens subsp. laumondii) protein is Imidazole glycerol phosphate synthase subunit HisF.